We begin with the raw amino-acid sequence, 548 residues long: Sesquiterpene synthase TPS1 (548 aa).

Positions 264, 301, 305, 442, and 445 each coordinate (2E,6E)-farnesyl diphosphate. Mg(2+)-binding residues include D301 and D305. A DDXXD motif motif is present at residues 301–305; that stretch reads DDTYD. Positions 445 and 453 each coordinate Mg(2+).

Belongs to the terpene synthase family. Tpsa subfamily. As to quaternary structure, monomer. Mg(2+) serves as cofactor. As to expression, expressed in leaves and stems.

Its subcellular location is the cytoplasm. It carries out the reaction (2E,6E)-farnesyl diphosphate = germacrene D + diphosphate. The enzyme catalyses (2E,6E)-farnesyl diphosphate = (-)-(E)-beta-caryophyllene + diphosphate. It catalyses the reaction (2E,6E)-farnesyl diphosphate = beta-copaene + diphosphate. Its pathway is secondary metabolite biosynthesis; terpenoid biosynthesis. In terms of biological role, sesquiterpene synthase involved in the biosynthesis of volatile compounds. Mediates the conversion of (2E,6E)-farnesyl diphosphate (FPP) into germacrene D, (-)-(E)-beta-caryophyllene and beta-copaene. This is Sesquiterpene synthase TPS1 from Xanthium strumarium (Rough cocklebur).